Reading from the N-terminus, the 670-residue chain is Probable potassium transport system protein Kup (670 aa).

The interval 1–42 is disordered; the sequence is MSQIPSPNDPPPAGAVPTSGAPAGPSATPAPSPTAGFSLPEH. A compositionally biased stretch (low complexity) spans 15–35; sequence AVPTSGAPAGPSATPAPSPTA. 12 helical membrane passes run 51–71, 91–111, 144–164, 180–200, 208–228, 254–274, 290–310, 322–342, 380–400, 406–426, 440–460, and 464–484; these read LAAL…TSPL, VLGV…FKYM, VLLM…IITP, PAME…LFLF, VGAV…VLGV, GWHG…GEAL, WLGL…ALLL, LLAP…AAIV, IYLP…VLGF, LASA…LLFH, AWPL…ANVV, and DGGW…STWK.

It belongs to the HAK/KUP transporter (TC 2.A.72) family.

The protein resides in the cell inner membrane. It catalyses the reaction K(+)(in) + H(+)(in) = K(+)(out) + H(+)(out). Transport of potassium into the cell. Likely operates as a K(+):H(+) symporter. The sequence is that of Probable potassium transport system protein Kup from Anaeromyxobacter dehalogenans (strain 2CP-C).